Reading from the N-terminus, the 282-residue chain is Bifunctional protein FolD 2 (282 aa).

Residues 164–166 (GRS) and S189 each bind NADP(+).

This sequence belongs to the tetrahydrofolate dehydrogenase/cyclohydrolase family. In terms of assembly, homodimer.

The catalysed reaction is (6R)-5,10-methylene-5,6,7,8-tetrahydrofolate + NADP(+) = (6R)-5,10-methenyltetrahydrofolate + NADPH. The enzyme catalyses (6R)-5,10-methenyltetrahydrofolate + H2O = (6R)-10-formyltetrahydrofolate + H(+). It functions in the pathway one-carbon metabolism; tetrahydrofolate interconversion. Functionally, catalyzes the oxidation of 5,10-methylenetetrahydrofolate to 5,10-methenyltetrahydrofolate and then the hydrolysis of 5,10-methenyltetrahydrofolate to 10-formyltetrahydrofolate. The chain is Bifunctional protein FolD 2 from Lactobacillus johnsonii (strain CNCM I-12250 / La1 / NCC 533).